Consider the following 740-residue polypeptide: MKRQFAKIKIAAENLSRSSKSDSKDSELEAIERQVDRYRDTIEKIVRKLPALSGGGGSGSGSSEEQDKRTKKNSHYKIAQALDESAKELPKDMPLQKVLANCGELEKTMAECIIESELETEAKVVRRLKNILDKEIQEISTLKRNVSRTLQEYTSLKRSHEAAIRLEEPAAKVNHIKSQQEECELKLEKERDAWAAQMLELIAKEDEIVSCIRDYVLNQRNYHERALQHVNASLARIQDTIQGTEKSRFGTSLKEHLTSTNREISYIVELCCCCLLEHGLEEEGLLRVGCASTKLRRMKHALEAQHVKTPLPLDYQDPHVIGSILKLYLRELPEPLLTYNLYKDFIRIAERHSEAERKTEIKAILTKLPKENYANLRYLTRFLSIVQQRSALNKMSSQNLAIVMSPNMLWPRIDKSSNAPADYIGQVNSSSAANIIVELLISQWDYFFIGEVEFYLTLQKQKLFVEGKSKSNSSNENLDRNDSEVMESPRYGTLRRQKANAPSPPTTNGNGIIMTTSQTSHRPHAKELFPQQTPEKQEKPAKPPLPNLPQFQSPAASQPTQTQLEPLPPPPVTPAKPVPMTRTQFFGLDNLPSPTADRKSTDSIGSFKLKPDVPQKPLLPKRPTVLGVGVPKADGKSDDEGGTTPTQATIDNGNGSVRFKTEHFLDKLRQENGETNGTREVSSTTKENNHNHDPPATAADQNQQQAQPQVTTPISPNSFQTPKRPTVPAPPPPTNWKSSD.

The region spanning 13–246 is the BAR domain; it reads ENLSRSSKSD…IQDTIQGTEK (234 aa). Residues 49–74 form a disordered region; the sequence is LPALSGGGGSGSGSSEEQDKRTKKNS. The Rho-GAP domain maps to 251–448; sequence TSLKEHLTST…LLISQWDYFF (198 aa). A disordered region spans residues 467 to 740; sequence GKSKSNSSNE…PPPTNWKSSD (274 aa). Residues S469 and S473 each carry the phosphoserine modification. Positions 506 to 520 are enriched in polar residues; that stretch reads TTNGNGIIMTTSQTS. Pro residues predominate over residues 566–577; that stretch reads PLPPPPVTPAKP. At S593 the chain carries Phosphoserine. A Phosphothreonine modification is found at T595. Residues 643 to 655 show a composition bias toward polar residues; that stretch reads TTPTQATIDNGNG. Basic and acidic residues predominate over residues 659-672; the sequence is FKTEHFLDKLRQEN. Polar residues predominate over residues 673–686; that stretch reads GETNGTREVSSTTK. The span at 694-713 shows a compositional bias: low complexity; that stretch reads PPATAADQNQQQAQPQVTTP. Position 715 is a phosphoserine (S715). Residue T721 is modified to Phosphothreonine. Positions 725–734 are enriched in pro residues; that stretch reads PTVPAPPPPT. Phosphoserine is present on residues S738 and S739.

GTPase activator for the Rho-type GTPases by converting them to an inactive GDP-bound state. The chain is Rho GTPase-activating protein 92B (RhoGAP92B) from Drosophila melanogaster (Fruit fly).